Here is a 652-residue protein sequence, read N- to C-terminus: MSEKVIDVQDAWRDRALIDEAKYKEMYEASVSDPETFWGEHGKRIDWSTPFSKVKNTSFAPGDVSIKWFEDGRTNVALNCIDRHLATRGDQTAIIWEGDDPNESKHITYRQLHAEVCRMANVLRNRGVGKGDRVTLYLPMIPEAAYAMLACARLGAIHAIVFGGFSPDSLASRIKGCGSKLVITADEGLRGGRKVPLKANVDEAIKRLDKDLVDHVIVVKRTGGNVAMEPGRDVYYHEAAEQVTDECPAEAVEAEHPLFILYTSGSTGQPKGVVHTTGGYLVYASMTHQYVFDYHDGEVYWCTADVGWVTGHSYIVYGPLANGATTLMFEGIPTYPSNSRFWEVIDKHKVNIFYTAPTAIRSLMGGGEGPVKKTSRQSLRVLGSVGEPINPEAWDWYYRVVGDSRCPIVDTWWQTETGGILITPLPGATRLKPGSATLPFFGVQPVMVDAEGKILDGACEGNLCIKDSWPGQMRTVYGDHERFEQTYFSTYKDLYFTGDGARRDADGYYWITGRVDDVINVSGHRMGTAEVESSLVAHPKVSEAAVVGYPHNVKGQGIYAYVTLNEGEEGTDELRKELVTWVRKDIGPIASPDLLQFAPGLPKTRSGKIMRRILRKIAEDDFGSLGDTSTLAEPAVVDDLIENRQNRQNRSA.

CoA is bound by residues 190 to 193 (RGGR) and Thr-310. Residues 386 to 388 (GEP), 410 to 415 (DTWWQT), Asp-499, and Arg-514 contribute to the ATP site. CoA is bound at residue Ser-522. Residue Arg-525 participates in ATP binding. Residues Val-536, His-538, and Val-541 each contribute to the Mg(2+) site. Residue Arg-583 coordinates CoA. N6-acetyllysine is present on Lys-608.

This sequence belongs to the ATP-dependent AMP-binding enzyme family. Requires Mg(2+) as cofactor. In terms of processing, acetylated. Deacetylation by the SIR2-homolog deacetylase activates the enzyme.

The catalysed reaction is acetate + ATP + CoA = acetyl-CoA + AMP + diphosphate. Its function is as follows. Catalyzes the conversion of acetate into acetyl-CoA (AcCoA), an essential intermediate at the junction of anabolic and catabolic pathways. AcsA undergoes a two-step reaction. In the first half reaction, AcsA combines acetate with ATP to form acetyl-adenylate (AcAMP) intermediate. In the second half reaction, it can then transfer the acetyl group from AcAMP to the sulfhydryl group of CoA, forming the product AcCoA. This chain is Acetyl-coenzyme A synthetase, found in Methylorubrum extorquens (strain CM4 / NCIMB 13688) (Methylobacterium extorquens).